Reading from the N-terminus, the 776-residue chain is Mitochondrial intermediate peptidase (776 aa).

A mitochondrion-targeting transit peptide spans 1 to 28 (MFVRFYKRLDRQYIQSQRRWILSSNKCL). Residues 48–71 (DHWEESQAQNTSSEQDNKGKNSSY) form a disordered region. Positions 53 to 71 (SQAQNTSSEQDNKGKNSSY) are enriched in polar residues. H567 is a binding site for Zn(2+). Residue E568 is part of the active site. Residues H571 and H574 each coordinate Zn(2+).

The protein belongs to the peptidase M3 family. Zn(2+) is required as a cofactor.

The protein resides in the mitochondrion matrix. It carries out the reaction Release of an N-terminal octapeptide as second stage of processing of some proteins imported into the mitochondrion.. Functionally, cleaves proteins, imported into the mitochondrion, to their mature size. While most mitochondrial precursor proteins are processed to the mature form in one step by mitochondrial processing peptidase (MPP), the sequential cleavage by MIP of an octapeptide after initial processing by MPP is a required step for a subgroup of nuclear-encoded precursor proteins destined for the matrix or the inner membrane. This chain is Mitochondrial intermediate peptidase (OCT1), found in Eremothecium gossypii (strain ATCC 10895 / CBS 109.51 / FGSC 9923 / NRRL Y-1056) (Yeast).